The sequence spans 541 residues: Lysosomal cobalamin transport escort protein LMBD1 (541 aa).

Topologically, residues 1-11 are extracellular; the sequence is MATPVALLSES. A helical membrane pass occupies residues 12–31; that stretch reads VLGWSIFTVVLLVILAFCWV. Residues 32–50 are Cytoplasmic-facing; sequence YIRKYQSRQESEVISTITA. A helical transmembrane segment spans residues 51-71; sequence ICALAIALITSALLPVDIFLV. At 72–101 the chain is on the extracellular side; that stretch reads SFMKHPNGTYKEWAANNETRVQIEDTVLYG. Asn78 and Asn88 each carry an N-linked (GlcNAc...) asparagine glycan. The helical transmembrane segment at 102 to 122 threads the bilayer; that stretch reads YYTLYSIILFCVFLWIPFVYF. Over 123–145 the chain is Cytoplasmic; sequence YYEEKDEDNNNKCLQVKNALKYT. A helical transmembrane segment spans residues 146–166; it reads IGFVIVCSALLLIGTFVPLAS. Residues 167 to 189 are Extracellular-facing; the sequence is PPNQNSTQWQKVQYLFEELGSSH. Asn171 is a glycosylation site (N-linked (GlcNAc...) asparagine). The helical transmembrane segment at 190 to 210 threads the bilayer; it reads GLAALSFSISSLTLIGMLAVI. Over 211–306 the chain is Cytoplasmic; it reads TYTAYGMSVL…KVGSALRPMK (96 aa). A helical transmembrane segment spans residues 307 to 327; that stretch reads ILLGVFFILVALLFFVTLFIS. The Extracellular segment spans residues 328–365; that stretch reads NLDKALHSAGISTGFIIFGTNLTNPLNELLLALQPVFP. The N-linked (GlcNAc...) asparagine glycan is linked to Asn348. The chain crosses the membrane as a helical span at residues 366 to 386; the sequence is LDYVLITVITMYFVFTSMAGI. Topologically, residues 387–409 are cytoplasmic; that stretch reads RNMGIWFFWIRLYKIRPQRTRPQ. A helical membrane pass occupies residues 410–430; the sequence is ALLFLCMILLLIVLHTSYMIY. At 431-488 the chain is on the extracellular side; sequence SLAPQYVMYGSQKYLLQTPLPTAVPSQSNRSATITKICDADAPEDQCTVTRSYLFLHK. N-linked (GlcNAc...) asparagine glycosylation is present at Asn459. A helical membrane pass occupies residues 489–509; that stretch reads FWFFSTIYYFGNWAFLGVFLI. Residues 510 to 541 lie on the Cytoplasmic side of the membrane; sequence GLVVSCCKGKKSVIEGEVDADDSDFSDDEYVH.

Belongs to the LIMR family. LMBRD1 subfamily.

It localises to the endoplasmic reticulum membrane. It is found in the lysosome membrane. Its subcellular location is the cell membrane. Its function is as follows. Lysosomal membrane chaperone required to export cobalamin (vitamin B12) from the lysosome to the cytosol, allowing its conversion to cofactors. Targets ABCD4 transporter from the endoplasmic reticulum to the lysosome. Then forms a complex with lysosomal ABCD4 and cytoplasmic MMACHC to transport cobalamin across the lysosomal membrane. May play a role in mediating and regulating the internalization of the insulin receptor. This Danio rerio (Zebrafish) protein is Lysosomal cobalamin transport escort protein LMBD1 (lmbrd1).